The sequence spans 911 residues: MITAKKHPLDNCQLFVQLKKLFHDYNEKVQRLKDMIYWSGNDEHIAKICDQVTDLLVEHDLIIQPPDTMDPCAMNHLRGLLVYLVLNTAHDDIQCESQWSANVMHLCNQLPPIPLFLTIAIAVNCCLMEPLEEFLACGPRWLTIQYFEAFNEALSVINSDCVETLPLLSAALRAAGRAIVNCNLPAENKQLLRQIACMEHRHILDSKQRLHTLPRPSTRKIYLAKAMDHLIEVLLYTLNDPLKREKPNCFAVYSQITEDISDSNSSDPMPDLRHFAQILLDVLQRIFQLVSVDTYMYWHEMKSKSALYNCQELICRQTAELLKVLQSDKLLGEHPVCKQMQSFADAAKTLEQRVAEMRIGELLAFIDSGMATNEELLAGLDNLFSRFIAFGSDECLETMANHLIMLTKKHAQIILSFLGQVVESEMVVEDEGISVTEVNQGDDEDETSSNDDYEELLSLVLRPLFMQLNVEDKMEVLLLRDEQNVTQGFNFKAPDHRERRIRFFNQLDYNKRFPITEFLVLCFENARQTWIDFSHLGVTHTRFSKLFWHIAQSCPKHAAFHISACADNILVNEQLLQKPYALQFTLYLYGHRQILNGLYTSARQLCVSLKDGRCPYGEDELRQAQNRFLDACAYGLAKFIEPMNLPSLQLILKLLKQISLGESNLITRGTAELNALEKEHPKLENGDDAPAVKVAKHYTYLHASLPEWRLKHWKLISHVMKTIDALRWDLATFEDFRVDNLELAVWYWQDGLSHLTFLGTEFRQRILNQVSKLKHKDFWIIYLKEDTLKDTRSFLKLLTQSSAQEANDLFNKLLKKRADCAVMGDLSDAVVKVNSESAFMAFRFLFREYLIAFRSHAKHNKTITKRQHWDHLMAVVAKAPFSIRNEIMELASKAFAVRFGINIQEQQAAKC.

As to quaternary structure, component of the core survival motor neuron (SMN) complex composed of Smn, Gem2, Gem3, rig/Gem5 and one of 3 almost identical Gem4 paralogs encoded by Glos/Gem4a, Gem4b or Gem4c. Interacts with Smn; the interaction is probably indirect.

Its function is as follows. Component of the survival motor neuron (SMN) complex that catalyzes the assembly of small nuclear ribonucleoproteins (snRNPs), the building blocks of the spliceosome, and thereby plays an important role in the splicing of cellular pre-mRNAs. One of 3 almost identical paralogs (Glos/Gem4a, Gem4b and Gem4c), resulting from a genomic triplication, that have some redundant function. Required for neuromuscular function and organismal viability. This is Gem-associated protein 4a from Drosophila melanogaster (Fruit fly).